Reading from the N-terminus, the 80-residue chain is Dermaseptin-DA3 (80 aa).

The first 22 residues, 1–22, serve as a signal peptide directing secretion; it reads MAFLKKSLFLVLFLGLVSLSIC. Residues 23-42 constitute a propeptide that is removed on maturation; sequence EEKRENEDEEEQEDDEQSEE. Positions 24–48 are disordered; sequence EKRENEDEEEQEDDEQSEEKRGMWS. Positions 29 to 40 are enriched in acidic residues; that stretch reads EDEEEQEDDEQS. Leu77 carries the leucine amide modification. Positions 79-80 are excised as a propeptide; that stretch reads EQ.

This sequence belongs to the frog skin active peptide (FSAP) family. Dermaseptin subfamily. Expressed by the skin glands.

The protein resides in the secreted. Functionally, possesses a potent antimicrobial activity against Gram-positive and Gram-negative bacteria. Probably acts by disturbing membrane functions with its amphipathic structure. This is Dermaseptin-DA3 from Agalychnis dacnicolor (Giant Mexican leaf frog).